The chain runs to 160 residues: Serine-protein kinase RsbW (160 aa).

Belongs to the anti-sigma-factor family.

It catalyses the reaction L-seryl-[protein] + ATP = O-phospho-L-seryl-[protein] + ADP + H(+). The enzyme catalyses L-threonyl-[protein] + ATP = O-phospho-L-threonyl-[protein] + ADP + H(+). In terms of biological role, negative regulator of sigma-B activity. Phosphorylates and inactivates its specific antagonist protein, RsbV. Upon phosphorylation of RsbV, RsbW is released and binds to sigma-B, thereby blocking its ability to form an RNA polymerase holoenzyme (E-sigma-B). The sequence is that of Serine-protein kinase RsbW from Bacillus cereus (strain ATCC 10987 / NRS 248).